Reading from the N-terminus, the 574-residue chain is Phospholipase B-like protein A (574 aa).

A signal peptide spans 1–20 (MRVIRSLLLLTIAIIGSVLS). Asparagine 159, asparagine 195, and asparagine 415 each carry an N-linked (GlcNAc...) asparagine glycan.

It belongs to the phospholipase B-like family.

It is found in the secreted. In terms of biological role, phospholipase that removes both fatty-acid chains from phosphatidylcholine and produces the water-soluble glycerophosphorylcholine. In addition to phosphatidylcholine deacylation, it also hydrolyzes phosphatidylinositol and phosphatidylethanolamine. In Dictyostelium discoideum (Social amoeba), this protein is Phospholipase B-like protein A (plbA).